Here is a 1028-residue protein sequence, read N- to C-terminus: Protein SMAX1-LIKE 5 (1028 aa).

A Clp R domain is found at 8 to 199; sequence IQQTLTTEAA…CVEDCSVSSV (192 aa). Repeat stretches follow at residues 12-102 and 116-199; these read LTTE…LNRL and LANA…VSSV. Residues 871–875 carry the EAR motif; the sequence is LDLNI.

The protein belongs to the ClpA/ClpB family. Interacts probably with TPL/TPR in an EAR-motif dependent manner. Detected in roots, seedlings and axillary branches.

Functionally, may function in a transcriptional corepressor complex. In Arabidopsis thaliana (Mouse-ear cress), this protein is Protein SMAX1-LIKE 5.